Consider the following 555-residue polypeptide: Glucose-6-phosphate isomerase (555 aa).

Residues 169 to 170 (GS), 219 to 224 (SKTFTT), glutamine 364, glutamate 368, histidine 399, and lysine 521 contribute to the D-glucose 6-phosphate site. The Proton donor role is filled by glutamate 368. Active-site residues include histidine 399 and lysine 521.

Belongs to the GPI family. Homodimer.

The protein localises to the cytoplasm. Its subcellular location is the cytosol. It carries out the reaction alpha-D-glucose 6-phosphate = beta-D-fructose 6-phosphate. The protein operates within carbohydrate degradation; glycolysis; D-glyceraldehyde 3-phosphate and glycerone phosphate from D-glucose: step 2/4. Its function is as follows. In the cytoplasm, catalyzes the conversion of glucose-6-phosphate to fructose-6-phosphate, the second step in glycolysis, and the reverse reaction during gluconeogenesis. The protein is Glucose-6-phosphate isomerase (RAG2) of Kluyveromyces lactis (strain ATCC 8585 / CBS 2359 / DSM 70799 / NBRC 1267 / NRRL Y-1140 / WM37) (Yeast).